We begin with the raw amino-acid sequence, 94 residues long: Small ribosomal subunit protein bS6 (94 aa).

Belongs to the bacterial ribosomal protein bS6 family.

Binds together with bS18 to 16S ribosomal RNA. This chain is Small ribosomal subunit protein bS6, found in Alkaliphilus oremlandii (strain OhILAs) (Clostridium oremlandii (strain OhILAs)).